Reading from the N-terminus, the 644-residue chain is Exoribonuclease 2 (644 aa).

One can recognise an RNB domain in the interval 190–516; that stretch reads REDLTALDFI…INHRLLKALI (327 aa). The S1 motif domain occupies 562–644; the sequence is DSRFAAEIID…ENRSVIARPV (83 aa).

The protein belongs to the RNR ribonuclease family. RNase II subfamily.

The protein resides in the cytoplasm. It carries out the reaction Exonucleolytic cleavage in the 3'- to 5'-direction to yield nucleoside 5'-phosphates.. Involved in mRNA degradation. Hydrolyzes single-stranded polyribonucleotides processively in the 3' to 5' direction. This is Exoribonuclease 2 from Sodalis glossinidius (strain morsitans).